The primary structure comprises 449 residues: Packaging protein 1 (449 aa).

Over residues Met1 to Lys10 the composition is skewed to basic residues. The disordered stretch occupies residues Met1–Pro64. Positions Lys11–Ala25 are enriched in basic and acidic residues. Residues Ser35 to Ile59 are compositionally biased toward polar residues. Position 168–175 (Gly168–Ser175) interacts with ATP. A DNA-binding region spans residues Thr437–Lys449.

The protein belongs to the adenoviridae packaging protein 1 family. As to quaternary structure, homodimer. Part of a genome packaging complex composed of packaging proteins 1, 2 and 3; this complex specifically binds to the packaging sequence on the left end of viral genomic DNA and performs packaging of the viral genome. Interacts with protein 33K.

The protein resides in the virion. The protein localises to the host nucleus. Its subcellular location is the host nucleoplasm. It localises to the host nucleolus. Its function is as follows. Component of the packaging machinery which encapsidates the viral DNA into preformed capsids and transcriptional activator of the viral major late promoter (MLP). Binds, along with packaging proteins 2 and 3, to the specific packaging sequence on the left end of viral genomic DNA and displays ATPase activity thereby providing the power stroke of the packaging machinery. The activity of packaging protein IVa2 is stimulated by protein 33K which acts as a terminase. May be the protein that pumps DNA into the capsid powered by ATP hydrolysis. Specifically binds to the 5'-CG-3' nucleotides of the repeats making up the packaging sequence. Component of the DEF-A and DEF-B transcription factors that bind downstream elements of the major late promoter (MLP), and stimulate transcription from the MLP after initiation of viral DNA replication. DEF-A is a heterodimer packaging proteins 1 and 2 and DEF-B is a homodimer of packaging protein 1. This is Packaging protein 1 from Mus musculus (Mouse).